The chain runs to 317 residues: Transaldolase (317 aa).

Catalysis depends on Lys-132, which acts as the Schiff-base intermediate with substrate.

This sequence belongs to the transaldolase family. Type 1 subfamily. As to quaternary structure, homodimer.

The protein resides in the cytoplasm. It catalyses the reaction D-sedoheptulose 7-phosphate + D-glyceraldehyde 3-phosphate = D-erythrose 4-phosphate + beta-D-fructose 6-phosphate. The protein operates within carbohydrate degradation; pentose phosphate pathway; D-glyceraldehyde 3-phosphate and beta-D-fructose 6-phosphate from D-ribose 5-phosphate and D-xylulose 5-phosphate (non-oxidative stage): step 2/3. In terms of biological role, transaldolase is important for the balance of metabolites in the pentose-phosphate pathway. In Yersinia pseudotuberculosis serotype IB (strain PB1/+), this protein is Transaldolase.